The following is a 209-amino-acid chain: Protease (209 aa).

Catalysis depends on residues histidine 60, aspartate 77, and cysteine 127.

It belongs to the peptidase C5 family. Interacts with protease cofactor pVI-C; this interaction is necessary for protease activation.

The protein resides in the virion. Its subcellular location is the host nucleus. The enzyme catalyses Cleaves proteins of the adenovirus and its host cell at two consensus sites: -Yaa-Xaa-Gly-Gly-|-Xaa- and -Yaa-Xaa-Gly-Xaa-|-Gly- (in which Yaa is Met, Ile or Leu, and Xaa is any amino acid).. Its activity is regulated as follows. Requires DNA and protease cofactor for maximal activation. Inside nascent virions, becomes partially activated by binding to the viral DNA, allowing it to cleave the cofactor that binds to the protease and fully activates it. Actin, like the viral protease cofactor, seems to act as a cofactor in the cleavage of cytokeratin 18 and of actin itself. Functionally, cleaves viral precursor proteins (pTP, pIIIa, pVI, pVII, pVIII, and pX) inside newly assembled particles giving rise to mature virions. Protease complexed to its cofactor slides along the viral DNA to specifically locate and cleave the viral precursors. Mature virions have a weakened organization compared to the unmature virions, thereby facilitating subsequent uncoating. Without maturation, the particle lacks infectivity and is unable to uncoat. Late in adenovirus infection, in the cytoplasm, may participate in the cytoskeleton destruction. Cleaves host cell cytoskeletal keratins K7 and K18. This chain is Protease, found in Homo sapiens (Human).